Consider the following 184-residue polypeptide: Peptide deformylase 2 (184 aa).

Residues cysteine 110 and histidine 153 each coordinate Fe cation. Residue glutamate 154 is part of the active site. Residue histidine 157 coordinates Fe cation.

Belongs to the polypeptide deformylase family. Fe(2+) is required as a cofactor.

It catalyses the reaction N-terminal N-formyl-L-methionyl-[peptide] + H2O = N-terminal L-methionyl-[peptide] + formate. Functionally, removes the formyl group from the N-terminal Met of newly synthesized proteins. Requires at least a dipeptide for an efficient rate of reaction. N-terminal L-methionine is a prerequisite for activity but the enzyme has broad specificity at other positions. This Geobacillus stearothermophilus (Bacillus stearothermophilus) protein is Peptide deformylase 2.